Reading from the N-terminus, the 311-residue chain is tRNA-cytidine(32) 2-sulfurtransferase (311 aa).

Positions 47-52 match the PP-loop motif motif; the sequence is SGGKDS. Residues cysteine 122, cysteine 125, and cysteine 213 each coordinate [4Fe-4S] cluster.

This sequence belongs to the TtcA family. In terms of assembly, homodimer. Mg(2+) is required as a cofactor. The cofactor is [4Fe-4S] cluster.

It is found in the cytoplasm. The catalysed reaction is cytidine(32) in tRNA + S-sulfanyl-L-cysteinyl-[cysteine desulfurase] + AH2 + ATP = 2-thiocytidine(32) in tRNA + L-cysteinyl-[cysteine desulfurase] + A + AMP + diphosphate + H(+). Its pathway is tRNA modification. Catalyzes the ATP-dependent 2-thiolation of cytidine in position 32 of tRNA, to form 2-thiocytidine (s(2)C32). The sulfur atoms are provided by the cysteine/cysteine desulfurase (IscS) system. The protein is tRNA-cytidine(32) 2-sulfurtransferase of Escherichia coli O127:H6 (strain E2348/69 / EPEC).